Consider the following 421-residue polypeptide: UDP-N-acetylglucosamine 1-carboxyvinyltransferase (421 aa).

22–23 (KN) lines the phosphoenolpyruvate pocket. Arginine 91 serves as a coordination point for UDP-N-acetyl-alpha-D-glucosamine. Cysteine 115 serves as the catalytic Proton donor. 2-(S-cysteinyl)pyruvic acid O-phosphothioketal is present on cysteine 115. Residues 120–124 (RPVDL), 160–163 (KVSV), aspartate 305, and isoleucine 327 contribute to the UDP-N-acetyl-alpha-D-glucosamine site.

This sequence belongs to the EPSP synthase family. MurA subfamily.

The protein resides in the cytoplasm. It carries out the reaction phosphoenolpyruvate + UDP-N-acetyl-alpha-D-glucosamine = UDP-N-acetyl-3-O-(1-carboxyvinyl)-alpha-D-glucosamine + phosphate. It participates in cell wall biogenesis; peptidoglycan biosynthesis. In terms of biological role, cell wall formation. Adds enolpyruvyl to UDP-N-acetylglucosamine. This chain is UDP-N-acetylglucosamine 1-carboxyvinyltransferase, found in Photorhabdus laumondii subsp. laumondii (strain DSM 15139 / CIP 105565 / TT01) (Photorhabdus luminescens subsp. laumondii).